The primary structure comprises 172 residues: Adenine phosphoribosyltransferase (172 aa).

It belongs to the purine/pyrimidine phosphoribosyltransferase family. As to quaternary structure, homodimer.

The protein resides in the cytoplasm. It carries out the reaction AMP + diphosphate = 5-phospho-alpha-D-ribose 1-diphosphate + adenine. The protein operates within purine metabolism; AMP biosynthesis via salvage pathway; AMP from adenine: step 1/1. Functionally, catalyzes a salvage reaction resulting in the formation of AMP, that is energically less costly than de novo synthesis. The protein is Adenine phosphoribosyltransferase of Anaeromyxobacter dehalogenans (strain 2CP-1 / ATCC BAA-258).